A 427-amino-acid chain; its full sequence is Retron Mx65 reverse transcriptase (427 aa).

Residues 136–366 form the Reverse transcriptase domain; it reads RHYSIHRPRE…GAQRVTGVTV (231 aa). Mg(2+) contacts are provided by Asp-219, Asp-315, and Asp-316.

The protein belongs to the bacterial reverse transcriptase family.

It catalyses the reaction DNA(n) + a 2'-deoxyribonucleoside 5'-triphosphate = DNA(n+1) + diphosphate. In terms of biological role, reverse transcriptase (RT) responsible for synthesis of msDNA-Mx65 (a branched molecule with RNA linked by a 2',5'-phosphodiester bond to ssDNA). The retron transcript serves as primer (from a conserved internal G residue) and template for the reaction, and codes for the RT. The retron is involved in antiviral defense. The chain is Retron Mx65 reverse transcriptase from Myxococcus xanthus.